Reading from the N-terminus, the 206-residue chain is Phosphoribosyl-dephospho-CoA transferase (206 aa).

Residues Asp131 and Asp133 contribute to the active site.

This sequence belongs to the MdcG family.

The catalysed reaction is apo-[malonate decarboxylase ACP] + 2'-(5''-triphospho-alpha-D-ribosyl)-3'-dephospho-CoA = holo-[malonate decarboxylase ACP] + diphosphate. Functionally, transfers 2'-(5-triphosphoribosyl)-3'-dephosphocoenzyme-A to the apo-[acyl-carrier-protein] of the malonate decarboxylase to yield holo-[acyl-carrier-protein]. This is Phosphoribosyl-dephospho-CoA transferase from Pseudomonas fluorescens (strain Pf0-1).